A 180-amino-acid chain; its full sequence is Bifunctional protein PyrR (180 aa).

Residues 99 to 111 (VILVDDVLYTCRT) carry the PRPP-binding motif.

The protein belongs to the purine/pyrimidine phosphoribosyltransferase family. PyrR subfamily. In terms of assembly, homodimer and homohexamer; in equilibrium.

The enzyme catalyses UMP + diphosphate = 5-phospho-alpha-D-ribose 1-diphosphate + uracil. In terms of biological role, regulates transcriptional attenuation of the pyrimidine nucleotide (pyr) operon by binding in a uridine-dependent manner to specific sites on pyr mRNA. This disrupts an antiterminator hairpin in the RNA and favors formation of a downstream transcription terminator, leading to a reduced expression of downstream genes. Functionally, also displays a weak uracil phosphoribosyltransferase activity which is not physiologically significant. The polypeptide is Bifunctional protein PyrR (Clostridium botulinum (strain Eklund 17B / Type B)).